The following is a 189-amino-acid chain: Potassium-transporting ATPase KdpC subunit (189 aa).

Residues 11–31 (LFVLLTVITGVLYPVFVTGLA) form a helical membrane-spanning segment.

The protein belongs to the KdpC family. In terms of assembly, the system is composed of three essential subunits: KdpA, KdpB and KdpC.

The protein localises to the cell inner membrane. Functionally, part of the high-affinity ATP-driven potassium transport (or Kdp) system, which catalyzes the hydrolysis of ATP coupled with the electrogenic transport of potassium into the cytoplasm. This subunit acts as a catalytic chaperone that increases the ATP-binding affinity of the ATP-hydrolyzing subunit KdpB by the formation of a transient KdpB/KdpC/ATP ternary complex. This chain is Potassium-transporting ATPase KdpC subunit, found in Polynucleobacter asymbioticus (strain DSM 18221 / CIP 109841 / QLW-P1DMWA-1) (Polynucleobacter necessarius subsp. asymbioticus).